The sequence spans 244 residues: Phosphoadenosine 5'-phosphosulfate reductase (244 aa).

The active-site Nucleophile; cysteine thiosulfonate intermediate is the Cys239.

Belongs to the PAPS reductase family. CysH subfamily.

The protein resides in the cytoplasm. The catalysed reaction is [thioredoxin]-disulfide + sulfite + adenosine 3',5'-bisphosphate + 2 H(+) = [thioredoxin]-dithiol + 3'-phosphoadenylyl sulfate. It functions in the pathway sulfur metabolism; hydrogen sulfide biosynthesis; sulfite from sulfate: step 3/3. Functionally, catalyzes the formation of sulfite from phosphoadenosine 5'-phosphosulfate (PAPS) using thioredoxin as an electron donor. This is Phosphoadenosine 5'-phosphosulfate reductase from Escherichia coli O157:H7.